A 36-amino-acid polypeptide reads, in one-letter code: Beta/delta/mu-theraphotoxin-Pv1 (36 aa).

3 disulfide bridges follow: C3–C17, C10–C22, and C16–C30. Residue F36 is modified to Phenylalanine amide.

It belongs to the neurotoxin 10 (Hwtx-1) family. As to expression, expressed by the venom gland.

It is found in the secreted. In terms of biological role, gating-modifier toxin that targets voltage-gated sodium channels. Inhibits the inactivation of Nav1.7/SCN9A. The chain is Beta/delta/mu-theraphotoxin-Pv1 from Poecilotheria vittata (Ghost ornamental tarantula).